Here is a 184-residue protein sequence, read N- to C-terminus: Photosystem I assembly protein Ycf4 (184 aa).

2 consecutive transmembrane segments (helical) span residues 19-39 and 64-84; these read ISNF…VLVG and LVMS…WCTI.

It belongs to the Ycf4 family.

It localises to the plastid. The protein resides in the chloroplast thylakoid membrane. Its function is as follows. Seems to be required for the assembly of the photosystem I complex. The protein is Photosystem I assembly protein Ycf4 of Oenothera elata subsp. hookeri (Hooker's evening primrose).